Consider the following 307-residue polypeptide: Metapyrocatechase (307 aa).

2 VOC domains span residues 7-122 and 150-269; these read RPGH…LYAD and RFDH…VFCG. Positions 153, 214, and 265 each coordinate Fe cation.

The protein belongs to the extradiol ring-cleavage dioxygenase family. In terms of assembly, homotetramer. The cofactor is Fe(2+).

It carries out the reaction catechol + O2 = (2Z,4E)-2-hydroxy-6-oxohexa-2,4-dienoate + H(+). Its pathway is xenobiotic degradation; toluene degradation. This chain is Metapyrocatechase (xylE), found in Pseudomonas putida (Arthrobacter siderocapsulatus).